Here is a 103-residue protein sequence, read N- to C-terminus: Large ribosomal subunit protein bL21 (103 aa).

It belongs to the bacterial ribosomal protein bL21 family. In terms of assembly, part of the 50S ribosomal subunit. Contacts protein L20.

Functionally, this protein binds to 23S rRNA in the presence of protein L20. The chain is Large ribosomal subunit protein bL21 from Pectobacterium atrosepticum (strain SCRI 1043 / ATCC BAA-672) (Erwinia carotovora subsp. atroseptica).